The sequence spans 549 residues: Polycomb group RING finger protein 3 homolog mig-32 (549 aa).

The tract at residues 1–263 (MTRKRPALAE…EESMRQKYGQ (263 aa)) is disordered. Residues 12–29 (VSSSRSRVTRRSTTGAPS) show a composition bias toward low complexity. Acidic residues-rich tracts occupy residues 38–49 (PESDADSEDDYD) and 87–100 (MDDD…DGEV). A compositionally biased stretch (basic residues) spans 118-130 (KTAKLQTKKKKKK). The span at 134–144 (PETPPTSPSPS) shows a compositional bias: pro residues. Over residues 145–156 (PSRSVSPSTTKS) the composition is skewed to low complexity. Residues 205 to 235 (EEIKLRERAERKARRIEEAKNRPKLTIEQKL) show a composition bias toward basic and acidic residues. A coiled-coil region spans residues 206-260 (EIKLRERAERKARRIEEAKNRPKLTIEQKLAKLRKKKERRERRKEQEKEESMRQK). Residues 236–247 (AKLRKKKERRER) show a composition bias toward basic residues. Positions 248–258 (RKEQEKEESMR) are enriched in basic and acidic residues. The RING-type zinc-finger motif lies at 329-368 (CGICDGYIVDATTIIDCMHTFCKSCLLTYFESDNNTCPTC).

In terms of assembly, component of a PRC1-like complex.

Its subcellular location is the nucleus. It localises to the nucleolus. Its function is as follows. Component of a Polycomb group (PcG) multiprotein PRC1-like complex, a complex class required to maintain the transcriptionally repressive state of many genes, throughout development. Required for ubiquitination of histone H2A. Plays a role in the formation of the male-specific genital sensilla (simple sense organs) known as rays. Required for normal migration of the hermaphrodite specific neurons (HSN) and for extension of some neuronal processes. Represses vulval fates in hypodermal cells that do not normally contribute to vulval development. The polypeptide is Polycomb group RING finger protein 3 homolog mig-32 (Caenorhabditis elegans).